A 335-amino-acid polypeptide reads, in one-letter code: Homeobox protein DBX1 (335 aa).

2 disordered regions span residues 56–102 (RSIP…LSPA) and 240–335 (KERE…ITVS). Low complexity predominate over residues 83–95 (GSPGSGSRRGSSP). A DNA-binding region (homeobox) is located at residues 181–240 (GMLRRAVFSDVQRKALEKTFQKQKYISKPDRKKLASKLGLKDSQVKIWFQNRRMKWRNSK). Positions 299 to 317 (GPLPASPAHSSSPGKPSDF) are enriched in low complexity. Residues 318-335 (SDSDEDEEGEEDEEITVS) show a composition bias toward acidic residues.

Belongs to the H2.0 homeobox family.

It localises to the nucleus. Could have a role in patterning the central nervous system during embryogenesis. Has a key role in regulating the distinct phenotypic features that distinguish two major classes of ventral interneurons, V0 and V1 neurons. Regulates the transcription factor profile, neurotransmitter phenotype, intraspinal migratory path and axonal trajectory of V0 neurons, features that differentiate them from an adjacent set of V1 neurons. In Rattus norvegicus (Rat), this protein is Homeobox protein DBX1 (Dbx1).